The primary structure comprises 698 residues: Zinc finger CCCH domain-containing protein 7 (698 aa).

A compositionally biased stretch (pro residues) spans 1–11 (MEEPSPVPPAA). Disordered stretches follow at residues 1-23 (MEEPSPVPPAAAPASLAAAPPTT), 56-95 (HAARPDAEVEPAAAAAIPPGGSGGLPHGDSPPPADVGGDR), 109-137 (APHETPSTSASPDAAVNPTTDPGVVPQGT), and 272-300 (GSLDGGGGFEEGEIEGDTQNLDADDSGNS). Low complexity-rich tracts occupy residues 12–21 (APASLAAAPP) and 65–74 (EPAAAAAIPP). Over residues 281–300 (EEGEIEGDTQNLDADDSGNS) the composition is skewed to acidic residues. 3 consecutive C3H1-type zinc fingers follow at residues 429–456 (PKVVKVCHFYLHGKCQQGNLCKFSHDTT), 458–485 (LTKSKPCTHYARGSCLKGDDCPYDHELS), and 486–511 (KYPCHNFMENGMCIRGDKCKFSHVIP). 2 disordered regions span residues 512 to 553 (TAEG…GEPA) and 607 to 682 (TEKH…QHEV). Polar residues-rich tracts occupy residues 535 to 548 (CQEQTSRQKTSTVY) and 665 to 680 (SLPTTAAVPSSVSTQH).

This is Zinc finger CCCH domain-containing protein 7 from Oryza sativa subsp. japonica (Rice).